The following is a 138-amino-acid chain: Acidic phospholipase A2 BITP01A (138 aa).

Residues 1–16 (MRTLWIMAVLLVGVEG) form the signal peptide. 7 disulfide bridges follow: cysteine 42–cysteine 131, cysteine 44–cysteine 60, cysteine 59–cysteine 111, cysteine 65–cysteine 138, cysteine 66–cysteine 104, cysteine 73–cysteine 97, and cysteine 91–cysteine 102. Ca(2+) is bound by residues tyrosine 43, glycine 45, and glycine 47. Histidine 63 is a catalytic residue. Aspartate 64 is a binding site for Ca(2+). Aspartate 105 is an active-site residue.

Ca(2+) serves as cofactor. As to expression, expressed by the venom gland.

It is found in the secreted. It carries out the reaction a 1,2-diacyl-sn-glycero-3-phosphocholine + H2O = a 1-acyl-sn-glycero-3-phosphocholine + a fatty acid + H(+). Snake venom phospholipase A2 (PLA2) that induces edema in mice, produces neuromuscular blockade in chick biventer cervicis, increases CK release and produces myonecrosis. PLA2 catalyzes the calcium-dependent hydrolysis of the 2-acyl groups in 3-sn-phosphoglycerides. In Bothrops insularis (Golden lancehead), this protein is Acidic phospholipase A2 BITP01A.